A 322-amino-acid polypeptide reads, in one-letter code: ATP-dependent 6-phosphofructokinase (322 aa).

ATP is bound at residue Gly11. Residue 21 to 25 coordinates ADP; it reads RAVTR. Residues 72–73 and 102–105 contribute to the ATP site; these read RC and GDGS. Residue Asp103 coordinates Mg(2+). A substrate-binding site is contributed by 127–129; it reads TID. Residue Asp129 is the Proton acceptor of the active site. Position 156 (Arg156) interacts with ADP. Substrate contacts are provided by residues Arg164 and 171–173; that span reads MGR. ADP is bound by residues 187 to 189, Arg213, and 215 to 217; these read GAE and KKH. Substrate is bound by residues Glu224, Arg245, and 251-254; that span reads HIQR.

Belongs to the phosphofructokinase type A (PFKA) family. ATP-dependent PFK group I subfamily. Prokaryotic clade 'B1' sub-subfamily. Homotetramer. It depends on Mg(2+) as a cofactor.

It is found in the cytoplasm. The catalysed reaction is beta-D-fructose 6-phosphate + ATP = beta-D-fructose 1,6-bisphosphate + ADP + H(+). It functions in the pathway carbohydrate degradation; glycolysis; D-glyceraldehyde 3-phosphate and glycerone phosphate from D-glucose: step 3/4. Allosterically activated by ADP and other diphosphonucleosides, and allosterically inhibited by phosphoenolpyruvate. Its function is as follows. Catalyzes the phosphorylation of D-fructose 6-phosphate to fructose 1,6-bisphosphate by ATP, the first committing step of glycolysis. The protein is ATP-dependent 6-phosphofructokinase of Staphylococcus epidermidis (strain ATCC 35984 / DSM 28319 / BCRC 17069 / CCUG 31568 / BM 3577 / RP62A).